We begin with the raw amino-acid sequence, 417 residues long: Serine hydroxymethyltransferase 3 (417 aa).

(6S)-5,6,7,8-tetrahydrofolate-binding positions include leucine 121 and 125–127 (GHL). At lysine 229 the chain carries N6-(pyridoxal phosphate)lysine. 354 to 356 (SPF) lines the (6S)-5,6,7,8-tetrahydrofolate pocket.

Belongs to the SHMT family. As to quaternary structure, homodimer. It depends on pyridoxal 5'-phosphate as a cofactor.

It localises to the cytoplasm. The enzyme catalyses (6R)-5,10-methylene-5,6,7,8-tetrahydrofolate + glycine + H2O = (6S)-5,6,7,8-tetrahydrofolate + L-serine. It participates in one-carbon metabolism; tetrahydrofolate interconversion. The protein operates within amino-acid biosynthesis; glycine biosynthesis; glycine from L-serine: step 1/1. Functionally, catalyzes the reversible interconversion of serine and glycine with tetrahydrofolate (THF) serving as the one-carbon carrier. This reaction serves as the major source of one-carbon groups required for the biosynthesis of purines, thymidylate, methionine, and other important biomolecules. Also exhibits THF-independent aldolase activity toward beta-hydroxyamino acids, producing glycine and aldehydes, via a retro-aldol mechanism. In Pseudomonas aeruginosa (strain ATCC 15692 / DSM 22644 / CIP 104116 / JCM 14847 / LMG 12228 / 1C / PRS 101 / PAO1), this protein is Serine hydroxymethyltransferase 3.